The following is a 400-amino-acid chain: Acetate kinase (400 aa).

Asn-10 is a Mg(2+) binding site. Lys-17 contacts ATP. Arg-91 is a substrate binding site. Asp-150 serves as the catalytic Proton donor/acceptor. Residues His-210–Gly-214, Asp-285–Arg-287, and Gly-333–Asn-337 contribute to the ATP site. Position 387 (Glu-387) interacts with Mg(2+).

The protein belongs to the acetokinase family. As to quaternary structure, homodimer. It depends on Mg(2+) as a cofactor. Requires Mn(2+) as cofactor.

Its subcellular location is the cytoplasm. It carries out the reaction acetate + ATP = acetyl phosphate + ADP. Its pathway is metabolic intermediate biosynthesis; acetyl-CoA biosynthesis; acetyl-CoA from acetate: step 1/2. Catalyzes the formation of acetyl phosphate from acetate and ATP. Can also catalyze the reverse reaction. The protein is Acetate kinase of Pectobacterium carotovorum subsp. carotovorum (strain PC1).